The primary structure comprises 94 residues: Pyrimidine/purine nucleoside phosphorylase (94 aa).

This sequence belongs to the nucleoside phosphorylase PpnP family.

It carries out the reaction a purine D-ribonucleoside + phosphate = a purine nucleobase + alpha-D-ribose 1-phosphate. The catalysed reaction is adenosine + phosphate = alpha-D-ribose 1-phosphate + adenine. It catalyses the reaction cytidine + phosphate = cytosine + alpha-D-ribose 1-phosphate. The enzyme catalyses guanosine + phosphate = alpha-D-ribose 1-phosphate + guanine. It carries out the reaction inosine + phosphate = alpha-D-ribose 1-phosphate + hypoxanthine. The catalysed reaction is thymidine + phosphate = 2-deoxy-alpha-D-ribose 1-phosphate + thymine. It catalyses the reaction uridine + phosphate = alpha-D-ribose 1-phosphate + uracil. The enzyme catalyses xanthosine + phosphate = alpha-D-ribose 1-phosphate + xanthine. Its function is as follows. Catalyzes the phosphorolysis of diverse nucleosides, yielding D-ribose 1-phosphate and the respective free bases. Can use uridine, adenosine, guanosine, cytidine, thymidine, inosine and xanthosine as substrates. Also catalyzes the reverse reactions. This chain is Pyrimidine/purine nucleoside phosphorylase, found in Saccharophagus degradans (strain 2-40 / ATCC 43961 / DSM 17024).